The following is a 229-amino-acid chain: Large ribosomal subunit protein uL1 (229 aa).

The protein belongs to the universal ribosomal protein uL1 family. As to quaternary structure, part of the 50S ribosomal subunit.

Its function is as follows. Binds directly to 23S rRNA. The L1 stalk is quite mobile in the ribosome, and is involved in E site tRNA release. Functionally, protein L1 is also a translational repressor protein, it controls the translation of the L11 operon by binding to its mRNA. This Actinobacillus pleuropneumoniae serotype 5b (strain L20) protein is Large ribosomal subunit protein uL1.